Here is a 277-residue protein sequence, read N- to C-terminus: Large ribosomal subunit protein uL2 (277 aa).

Disordered regions lie at residues 37–60 (KNSTAGRNNNGHITTRHKGGGHKH) and 223–264 (VVMN…NKRT). The span at 39–49 (STAGRNNNGHI) shows a compositional bias: polar residues. Residues 50–60 (TTRHKGGGHKH) show a composition bias toward basic residues. A compositionally biased stretch (basic and acidic residues) spans 229–244 (DHPHGGGEGRTGEARE).

This sequence belongs to the universal ribosomal protein uL2 family. In terms of assembly, part of the 50S ribosomal subunit. Forms a bridge to the 30S subunit in the 70S ribosome.

Its function is as follows. One of the primary rRNA binding proteins. Required for association of the 30S and 50S subunits to form the 70S ribosome, for tRNA binding and peptide bond formation. It has been suggested to have peptidyltransferase activity; this is somewhat controversial. Makes several contacts with the 16S rRNA in the 70S ribosome. The sequence is that of Large ribosomal subunit protein uL2 from Neisseria meningitidis serogroup B (strain ATCC BAA-335 / MC58).